Consider the following 564-residue polypeptide: Sphingomyelin phosphodiesterase 1 (564 aa).

Positions M1–A17 are cleaved as a signal peptide. The 85-residue stretch at F37–T121 folds into the Saposin B-type domain. 3 cysteine pairs are disulfide-bonded: C41–C117, C44–C110, and C72–C83. A glycan (N-linked (GlcNAc...) asparagine) is linked at N151. Positions 165 and 167 each coordinate Zn(2+). Intrachain disulfides connect C180/C185 and C186/C206. N221 is a glycosylation site (N-linked (GlcNAc...) asparagine). Zn(2+)-binding residues include D234 and N274. Residues C341 and C389 are joined by a disulfide bond. N351 carries N-linked (GlcNAc...) asparagine glycosylation. Positions 381, 415, and 417 each coordinate Zn(2+). The N-linked (GlcNAc...) asparagine glycan is linked to N430. 2 disulfide bridges follow: C538-C542 and C548-C561. Residue N556 is glycosylated (N-linked (GlcNAc...) asparagine).

This sequence belongs to the acid sphingomyelinase family. The cofactor is Zn(2+).

The protein localises to the secreted. The enzyme catalyses a sphingomyelin + H2O = phosphocholine + an N-acylsphing-4-enine + H(+). It carries out the reaction an N-acyl-15-methylhexadecasphing-4-enine-1-phosphocholine + H2O = an N-acyl-15-methylhexadecasphing-4-enine + phosphocholine + H(+). Its pathway is lipid metabolism; sphingolipid metabolism. Functionally, sphingomyelin phosphodiesterase (sphingomyelinase) that converts sphingomyelin to ceramide (N-acyl-sphingoid base) and phosphocholine at acidic pH. Displays its enzymatic activity when secreted. May play distinct roles in signaling. The sequence is that of Sphingomyelin phosphodiesterase 1 (asm-1) from Caenorhabditis elegans.